Reading from the N-terminus, the 381-residue chain is Protein-glutamate methylesterase/protein-glutamine glutaminase (381 aa).

One can recognise a Response regulatory domain in the interval Q8–Q125. A 4-aspartylphosphate modification is found at D59. In terms of domain architecture, CheB-type methylesterase spans F183–H375. Active-site residues include S195, H221, and D317.

Belongs to the CheB family. Post-translationally, phosphorylated by CheA. Phosphorylation of the N-terminal regulatory domain activates the methylesterase activity.

The protein resides in the cytoplasm. The enzyme catalyses [protein]-L-glutamate 5-O-methyl ester + H2O = L-glutamyl-[protein] + methanol + H(+). It catalyses the reaction L-glutaminyl-[protein] + H2O = L-glutamyl-[protein] + NH4(+). Involved in chemotaxis. Part of a chemotaxis signal transduction system that modulates chemotaxis in response to various stimuli. Catalyzes the demethylation of specific methylglutamate residues introduced into the chemoreceptors (methyl-accepting chemotaxis proteins or MCP) by CheR. Also mediates the irreversible deamidation of specific glutamine residues to glutamic acid. The sequence is that of Protein-glutamate methylesterase/protein-glutamine glutaminase from Ralstonia nicotianae (strain ATCC BAA-1114 / GMI1000) (Ralstonia solanacearum).